The chain runs to 242 residues: Type III pantothenate kinase (242 aa).

6–13 (DAGNTRIK) lines the ATP pocket. Substrate is bound by residues Tyr90 and 97 to 100 (GADR). The active-site Proton acceptor is the Asp99. Thr122 contacts ATP. Thr172 is a substrate binding site.

This sequence belongs to the type III pantothenate kinase family. As to quaternary structure, homodimer. NH4(+) is required as a cofactor. Requires K(+) as cofactor.

It is found in the cytoplasm. The enzyme catalyses (R)-pantothenate + ATP = (R)-4'-phosphopantothenate + ADP + H(+). Its pathway is cofactor biosynthesis; coenzyme A biosynthesis; CoA from (R)-pantothenate: step 1/5. Its function is as follows. Catalyzes the phosphorylation of pantothenate (Pan), the first step in CoA biosynthesis. The protein is Type III pantothenate kinase of Aromatoleum aromaticum (strain DSM 19018 / LMG 30748 / EbN1) (Azoarcus sp. (strain EbN1)).